Reading from the N-terminus, the 197-residue chain is Holliday junction branch migration complex subunit RuvA (197 aa).

The interval 1 to 64 is domain I; that stretch reads MYEYIKGKYI…EDFIGVYGFL (64 aa). A domain II region spans residues 65–143; sequence TKDELSMFKL…IDILEEDDEQ (79 aa). The segment at 144–148 is flexible linker; it reads TINKV. Residues 149-197 are domain III; that stretch reads TDDKKVLEAVAALITLGYSEKEANKVINSCDKNNSLEQIIKEALKYLMK.

Belongs to the RuvA family. Homotetramer. Forms an RuvA(8)-RuvB(12)-Holliday junction (HJ) complex. HJ DNA is sandwiched between 2 RuvA tetramers; dsDNA enters through RuvA and exits via RuvB. An RuvB hexamer assembles on each DNA strand where it exits the tetramer. Each RuvB hexamer is contacted by two RuvA subunits (via domain III) on 2 adjacent RuvB subunits; this complex drives branch migration. In the full resolvosome a probable DNA-RuvA(4)-RuvB(12)-RuvC(2) complex forms which resolves the HJ.

It localises to the cytoplasm. Its function is as follows. The RuvA-RuvB-RuvC complex processes Holliday junction (HJ) DNA during genetic recombination and DNA repair, while the RuvA-RuvB complex plays an important role in the rescue of blocked DNA replication forks via replication fork reversal (RFR). RuvA specifically binds to HJ cruciform DNA, conferring on it an open structure. The RuvB hexamer acts as an ATP-dependent pump, pulling dsDNA into and through the RuvAB complex. HJ branch migration allows RuvC to scan DNA until it finds its consensus sequence, where it cleaves and resolves the cruciform DNA. This Clostridium botulinum (strain 657 / Type Ba4) protein is Holliday junction branch migration complex subunit RuvA.